The following is a 475-amino-acid chain: Exodeoxyribonuclease 7 large subunit (475 aa).

The tract at residues 452–475 (DHGLNRSSKSKRIKSKQDDQGTLF) is disordered. Residues 466 to 475 (SKQDDQGTLF) show a composition bias toward basic and acidic residues.

Belongs to the XseA family. In terms of assembly, heterooligomer composed of large and small subunits.

The protein resides in the cytoplasm. It carries out the reaction Exonucleolytic cleavage in either 5'- to 3'- or 3'- to 5'-direction to yield nucleoside 5'-phosphates.. Functionally, bidirectionally degrades single-stranded DNA into large acid-insoluble oligonucleotides, which are then degraded further into small acid-soluble oligonucleotides. This chain is Exodeoxyribonuclease 7 large subunit, found in Bartonella quintana (strain Toulouse) (Rochalimaea quintana).